A 534-amino-acid chain; its full sequence is Putative ammonium transporter 1 (534 aa).

The next 11 membrane-spanning stretches (helical) occupy residues 31–51 (SFFL…FAYL), 69–89 (LLDS…LAYG), 115–135 (FFFQ…AVAE), 139–159 (FITY…VLTH), 184–204 (FAGS…AAWI), 223–243 (ILGH…FGFL), 263–283 (ALAM…YLGV), 291–311 (WTLL…CAGC), 318–338 (ACIW…KLMI), 346–366 (LDAF…SSII), and 401–421 (ICAL…FWIL).

The protein belongs to the ammonia transporter channel (TC 1.A.11.2) family.

Its subcellular location is the membrane. Its function is as follows. Involved in the uptake of ammonia. The chain is Putative ammonium transporter 1 (amt-1) from Caenorhabditis elegans.